A 631-amino-acid chain; its full sequence is Phosphomethylpyrimidine synthase (631 aa).

Residues N239, M268, Y297, H333, 353-355, 394-397, and E433 contribute to the substrate site; these read SRG and DGLR. H437 is a Zn(2+) binding site. Residue Y460 participates in substrate binding. H501 serves as a coordination point for Zn(2+). [4Fe-4S] cluster-binding residues include C581, C584, and C589.

It belongs to the ThiC family. Homodimer. Requires [4Fe-4S] cluster as cofactor.

It catalyses the reaction 5-amino-1-(5-phospho-beta-D-ribosyl)imidazole + S-adenosyl-L-methionine = 4-amino-2-methyl-5-(phosphooxymethyl)pyrimidine + CO + 5'-deoxyadenosine + formate + L-methionine + 3 H(+). The protein operates within cofactor biosynthesis; thiamine diphosphate biosynthesis. Catalyzes the synthesis of the hydroxymethylpyrimidine phosphate (HMP-P) moiety of thiamine from aminoimidazole ribotide (AIR) in a radical S-adenosyl-L-methionine (SAM)-dependent reaction. The sequence is that of Phosphomethylpyrimidine synthase from Shigella boydii serotype 4 (strain Sb227).